We begin with the raw amino-acid sequence, 158 residues long: Transcription elongation factor GreA (158 aa).

Positions 10 to 75 form a coiled coil; sequence TKEGKEKLEQ…QMLENMIRNA (66 aa).

The protein belongs to the GreA/GreB family.

Its function is as follows. Necessary for efficient RNA polymerase transcription elongation past template-encoded arresting sites. The arresting sites in DNA have the property of trapping a certain fraction of elongating RNA polymerases that pass through, resulting in locked ternary complexes. Cleavage of the nascent transcript by cleavage factors such as GreA or GreB allows the resumption of elongation from the new 3'terminus. GreA releases sequences of 2 to 3 nucleotides. The chain is Transcription elongation factor GreA from Geobacillus kaustophilus (strain HTA426).